Reading from the N-terminus, the 343-residue chain is S-adenosylmethionine:tRNA ribosyltransferase-isomerase (343 aa).

The protein belongs to the QueA family. As to quaternary structure, monomer.

It is found in the cytoplasm. It carries out the reaction 7-aminomethyl-7-carbaguanosine(34) in tRNA + S-adenosyl-L-methionine = epoxyqueuosine(34) in tRNA + adenine + L-methionine + 2 H(+). Its pathway is tRNA modification; tRNA-queuosine biosynthesis. Transfers and isomerizes the ribose moiety from AdoMet to the 7-aminomethyl group of 7-deazaguanine (preQ1-tRNA) to give epoxyqueuosine (oQ-tRNA). This is S-adenosylmethionine:tRNA ribosyltransferase-isomerase from Geobacter sulfurreducens (strain ATCC 51573 / DSM 12127 / PCA).